A 232-amino-acid chain; its full sequence is Ribonuclease 3 (232 aa).

An RNase III domain is found at 5–134 (QTVLKNHFAI…FLGALLLDKD (130 aa)). Residue Glu-47 participates in Mg(2+) binding. Asp-51 is a catalytic residue. The Mg(2+) site is built by Asp-120 and Glu-123. Residue Glu-123 is part of the active site. One can recognise a DRBM domain in the interval 160–229 (DYKTHLQELL…AKNAVEKGLD (70 aa)).

It belongs to the ribonuclease III family. In terms of assembly, homodimer. Mg(2+) is required as a cofactor.

The protein localises to the cytoplasm. It carries out the reaction Endonucleolytic cleavage to 5'-phosphomonoester.. Digests double-stranded RNA. Involved in the processing of primary rRNA transcript to yield the immediate precursors to the large and small rRNAs (23S and 16S). Processes some mRNAs, and tRNAs when they are encoded in the rRNA operon. Processes pre-crRNA and tracrRNA of type II CRISPR loci if present in the organism. The polypeptide is Ribonuclease 3 (Streptococcus pneumoniae (strain P1031)).